A 94-amino-acid chain; its full sequence is Co-chaperonin GroES (94 aa).

This sequence belongs to the GroES chaperonin family. As to quaternary structure, heptamer of 7 subunits arranged in a ring. Interacts with the chaperonin GroEL.

Its subcellular location is the cytoplasm. Functionally, together with the chaperonin GroEL, plays an essential role in assisting protein folding. The GroEL-GroES system forms a nano-cage that allows encapsulation of the non-native substrate proteins and provides a physical environment optimized to promote and accelerate protein folding. GroES binds to the apical surface of the GroEL ring, thereby capping the opening of the GroEL channel. The polypeptide is Co-chaperonin GroES (Anoxybacillus flavithermus (strain DSM 21510 / WK1)).